Here is a 258-residue protein sequence, read N- to C-terminus: Ribosomal RNA large subunit methyltransferase E (258 aa).

5 residues coordinate S-adenosyl-L-methionine: glycine 58, tryptophan 60, aspartate 78, aspartate 96, and aspartate 120. Lysine 160 (proton acceptor) is an active-site residue.

The protein belongs to the class I-like SAM-binding methyltransferase superfamily. RNA methyltransferase RlmE family.

The protein resides in the cytoplasm. The catalysed reaction is uridine(2552) in 23S rRNA + S-adenosyl-L-methionine = 2'-O-methyluridine(2552) in 23S rRNA + S-adenosyl-L-homocysteine + H(+). Functionally, specifically methylates the uridine in position 2552 of 23S rRNA at the 2'-O position of the ribose in the fully assembled 50S ribosomal subunit. This Methanococcus maripaludis (strain DSM 14266 / JCM 13030 / NBRC 101832 / S2 / LL) protein is Ribosomal RNA large subunit methyltransferase E.